The following is a 186-amino-acid chain: NADH dehydrogenase [ubiquinone] 1 beta subcomplex subunit 8, mitochondrial (186 aa).

The transit peptide at 1-28 directs the protein to the mitochondrion; that stretch reads MAVARAGVLGVQWLQRASRNVMPLGART. The chain crosses the membrane as a helical span at residues 133 to 153; sequence LFGFLAFMIFMCWVGDVYPVY.

It belongs to the complex I NDUFB8 subunit family. Complex I is composed of 45 different subunits.

The protein resides in the mitochondrion inner membrane. Functionally, accessory subunit of the mitochondrial membrane respiratory chain NADH dehydrogenase (Complex I), that is believed not to be involved in catalysis. Complex I functions in the transfer of electrons from NADH to the respiratory chain. The immediate electron acceptor for the enzyme is believed to be ubiquinone. This Homo sapiens (Human) protein is NADH dehydrogenase [ubiquinone] 1 beta subcomplex subunit 8, mitochondrial (NDUFB8).